A 228-amino-acid polypeptide reads, in one-letter code: MPRDTKPYSRPANAPRPGVKTERSNQFKAASTKYGKRVNDANKETRPVAFVDIKLNHRATPEMEQRMQAVYARQKPSIFNKSAVAEFIKNRTFVVAFAHPTYTIQFNKIPTVDQLRVYCSNINKDLLFKDKNQQMRNALPNAASFRVQINDEPLFKVQTVVYDKESAQLVLTIRFLPRQTMELLPMKKCVVYLNILSNASVDWAVPADLLRAFAKLALAPPIPAPQNV.

A disordered region spans residues 1 to 34; it reads MPRDTKPYSRPANAPRPGVKTERSNQFKAASTKY.

This is an uncharacterized protein from Orgyia pseudotsugata (Douglas-fir tussock moth).